Reading from the N-terminus, the 361-residue chain is Phospho-N-acetylmuramoyl-pentapeptide-transferase (361 aa).

10 consecutive transmembrane segments (helical) span residues 27-47 (GAFF…INLL), 72-92 (TPTM…LLWA), 98-118 (YVWL…MDDF), 135-155 (LAMG…LHPE), 169-189 (TLIN…AGSA), 200-220 (GLAI…AYAV), 240-260 (IFVF…YNAP), 263-283 (AVFM…AIAV), 289-309 (IVLV…IIQV), and 338-358 (QIVI…LATL).

It belongs to the glycosyltransferase 4 family. MraY subfamily. The cofactor is Mg(2+).

The protein resides in the cell inner membrane. It carries out the reaction UDP-N-acetyl-alpha-D-muramoyl-L-alanyl-gamma-D-glutamyl-meso-2,6-diaminopimeloyl-D-alanyl-D-alanine + di-trans,octa-cis-undecaprenyl phosphate = di-trans,octa-cis-undecaprenyl diphospho-N-acetyl-alpha-D-muramoyl-L-alanyl-D-glutamyl-meso-2,6-diaminopimeloyl-D-alanyl-D-alanine + UMP. Its pathway is cell wall biogenesis; peptidoglycan biosynthesis. Its function is as follows. Catalyzes the initial step of the lipid cycle reactions in the biosynthesis of the cell wall peptidoglycan: transfers peptidoglycan precursor phospho-MurNAc-pentapeptide from UDP-MurNAc-pentapeptide onto the lipid carrier undecaprenyl phosphate, yielding undecaprenyl-pyrophosphoryl-MurNAc-pentapeptide, known as lipid I. The polypeptide is Phospho-N-acetylmuramoyl-pentapeptide-transferase (Dinoroseobacter shibae (strain DSM 16493 / NCIMB 14021 / DFL 12)).